The primary structure comprises 366 residues: Carbamoyl phosphate synthase small chain (366 aa).

The interval 1-171 (MQSKRYLVLE…KTPYVSTGKD (171 aa)) is CPSase. Residues Ser-47, Gly-221, and Gly-223 each contribute to the L-glutamine site. Residues 173 to 360 (SVVLVDFGKK…VAMMTNFKEK (188 aa)) enclose the Glutamine amidotransferase type-1 domain. Residue Cys-248 is the Nucleophile of the active site. Positions 249, 252, 290, 292, and 293 each coordinate L-glutamine. Residues His-333 and Glu-335 contribute to the active site.

This sequence belongs to the CarA family. In terms of assembly, composed of two chains; the small (or glutamine) chain promotes the hydrolysis of glutamine to ammonia, which is used by the large (or ammonia) chain to synthesize carbamoyl phosphate. Tetramer of heterodimers (alpha,beta)4.

The enzyme catalyses hydrogencarbonate + L-glutamine + 2 ATP + H2O = carbamoyl phosphate + L-glutamate + 2 ADP + phosphate + 2 H(+). It catalyses the reaction L-glutamine + H2O = L-glutamate + NH4(+). Its pathway is amino-acid biosynthesis; L-arginine biosynthesis; carbamoyl phosphate from bicarbonate: step 1/1. The protein operates within pyrimidine metabolism; UMP biosynthesis via de novo pathway; (S)-dihydroorotate from bicarbonate: step 1/3. Its function is as follows. Small subunit of the glutamine-dependent carbamoyl phosphate synthetase (CPSase). CPSase catalyzes the formation of carbamoyl phosphate from the ammonia moiety of glutamine, carbonate, and phosphate donated by ATP, constituting the first step of 2 biosynthetic pathways, one leading to arginine and/or urea and the other to pyrimidine nucleotides. The small subunit (glutamine amidotransferase) binds and cleaves glutamine to supply the large subunit with the substrate ammonia. In Staphylococcus aureus (strain COL), this protein is Carbamoyl phosphate synthase small chain.